Consider the following 1451-residue polypeptide: Glutamate receptor ionotropic, NMDA 2A (1451 aa).

The signal sequence occupies residues M1–G20. The Extracellular segment spans residues A21–A547. N-linked (GlcNAc...) asparagine glycosylation occurs at N67. A disulfide bridge links C79 with C312. Zn(2+) is bound by residues H120, D258, and D274. 4 N-linked (GlcNAc...) asparagine glycosylation sites follow: N332, N372, N435, and N436. 2 disulfides stabilise this stretch: C421/C447 and C428/C448. 3 residues coordinate L-glutamate: S503, T505, and R510. Residue N533 is glycosylated (N-linked (GlcNAc...) asparagine). A helical membrane pass occupies residues S548 to F568. Topologically, residues E569–T592 are cytoplasmic. Residues F591–Q612 form a pore-forming region. The segment at residues I593–Q612 is an intramembrane region (discontinuously helical). At N613 to T617 the chain is on the cytoplasmic side. The chain crosses the membrane as a helical span at residues T618 to Y637. Residues T638 to N808 are Extracellular-facing. N-linked (GlcNAc...) asparagine glycosylation is present at N679. L-glutamate is bound by residues S681, T682, and D723. The cysteines at positions 737 and 792 are disulfide-linked. A helical membrane pass occupies residues M809–W829. Residues E830 to V1451 lie on the Cytoplasmic side of the membrane. The span at T1011–N1022 shows a compositional bias: polar residues. 2 disordered regions span residues T1011–K1080 and N1100–P1165. Composition is skewed to basic and acidic residues over residues C1055–K1073, N1100–P1113, and Y1138–E1149.

This sequence belongs to the glutamate-gated ion channel (TC 1.A.10.1) family. Heterotetramer. Forms heterotetrameric channels composed of two GluN1/zeta subunits (GRIN1), and two identical GluN2/epsilon subunits (GRIN2A, GRIN2B, GRIN2C or GRIN2D) or GluN3 subunits (GRIN3A or GRIN3B) (in vitro). In vivo, the subunit composition may depend on the expression levels of the different subunits.

The protein localises to the cell membrane. The protein resides in the postsynaptic cell membrane. The enzyme catalyses Ca(2+)(in) = Ca(2+)(out). It catalyses the reaction Na(+)(in) = Na(+)(out). It carries out the reaction K(+)(in) = K(+)(out). Its function is as follows. Component of N-methyl-D-aspartate (NMDA) receptors (NMDARs) that function as heterotetrameric, ligand-gated cation channels with high calcium permeability and voltage-dependent block by Mg(2+). MDARs participate in synaptic plasticity. Channel activation requires binding of the neurotransmitter L-glutamate to the GluN2 subunit, glycine binding to the GluN1 subunit, plus membrane depolarization to eliminate channel inhibition by Mg(2+). NMDARs mediate simultaneously the potasium efflux and the influx of calcium and sodium. Each GluN2 subunit confers differential attributes to channel properties, including activation, deactivation and desensitization kinetics, pH sensitivity, Ca2(+) permeability, and binding to allosteric modulators. Plays a role in dendritic branching in brain neurons and in synaptic plasticity. This chain is Glutamate receptor ionotropic, NMDA 2A, found in Xenopus laevis (African clawed frog).